We begin with the raw amino-acid sequence, 503 residues long: Proton-coupled zinc antiporter SLC30A1 (503 aa).

At 1–10 (MGCWGRNRGR) the chain is on the cytoplasmic side. Residues 11-31 (LLCMLLLTFMFMVLEVVVSRV) form a helical membrane-spanning segment. Residues 32–35 (TASL) lie on the Extracellular side of the membrane. The chain crosses the membrane as a helical span at residues 36–56 (AMLSDSFHMLSDVLALVVALV). Residues His43 and Asp47 each coordinate Zn(2+). The Cytoplasmic segment spans residues 57–78 (AERFARRTHATQKNTFGWIRAE). The helical transmembrane segment at 79–99 (VMGALVNAIFLTGLCFAILLE) threads the bilayer. Topologically, residues 100–113 (AVERFIEPHEMQQP) are extracellular. Residues 114-134 (LVVLSVGVAGLLVNVLGLCLF) form a helical membrane-spanning segment. Residues 135–243 (HHHSGEGQGA…RAGQLNMRGV (109 aa)) lie on the Cytoplasmic side of the membrane. The tract at residues 140–213 (EGQGAGHGHS…PEKLRSDDPV (74 aa)) is disordered. The segment at 145-156 (GHGHSHGHGHGH) is 6 X 2 AA approximate repeats of H-G. Basic residues predominate over residues 147–165 (GHSHGHGHGHLAKGARKAG). The span at 184–196 (TNTLVANTSNSNG) shows a compositional bias: polar residues. Residues 200-211 (DQAEPEKLRSDD) show a composition bias toward basic and acidic residues. A helical membrane pass occupies residues 244-264 (FLHVLGDALGSVIVVVNALVF). Zn(2+) is bound by residues His246 and Asp250. Residues 265 to 303 (YFNWKGCTEDDFCTNPCFPDPCKSSVEIINSTQAPMRDA) are Extracellular-facing. Residue Asn294 is glycosylated (N-linked (GlcNAc...) asparagine). Residues 304–324 (GPCWVLYLDPTLCIIMVCILL) traverse the membrane as a helical segment. Residues 325-503 (YTTYPLLKES…VPNKQPESSL (179 aa)) lie on the Cytoplasmic side of the membrane. Ser502 is subject to Phosphoserine.

Belongs to the cation diffusion facilitator (CDF) transporter (TC 2.A.4) family. SLC30A subfamily. As to quaternary structure, homodimer. Interacts with TMEM163. Interacts and forms a complex with TMC6 and TMC8; the interaction regulates zinc transport into the ER. As to expression, widely expressed.

It is found in the cell membrane. Its subcellular location is the basolateral cell membrane. It localises to the cytoplasmic vesicle membrane. The protein resides in the cytoplasm. The protein localises to the endoplasmic reticulum membrane. It is found in the golgi apparatus membrane. Its subcellular location is the nucleus membrane. It catalyses the reaction Zn(2+)(in) + 2 H(+)(out) = Zn(2+)(out) + 2 H(+)(in). Functionally, zinc ion:proton antiporter that could function at the plasma membrane mediating zinc efflux from cells against its electrochemical gradient protecting them from intracellular zinc accumulation and toxicity. Alternatively, could prevent the transport to the plasma membrane of CACNB2, the L-type calcium channels regulatory subunit, through a yet to be defined mechanism. By modulating the expression of these channels at the plasma membrane, could prevent calcium and zinc influx into cells. By the same mechanism, could also prevent L-type calcium channels-mediated heavy metal influx into cells. In some cells, could also function as a zinc ion:proton antiporter mediating zinc entry into the lumen of cytoplasmic vesicles. In macrophages, can increase zinc ions concentration into the lumen of cytoplasmic vesicles containing engulfed bacteria and could help inactivate them. Forms a complex with TMC6/EVER1 and TMC8/EVER2 at the ER membrane of keratynocytes which facilitates zinc uptake into the ER. Down-regulates the activity of transcription factors induced by zinc and cytokines. The sequence is that of Proton-coupled zinc antiporter SLC30A1 from Mus musculus (Mouse).